The sequence spans 235 residues: Effector CFEM1 (235 aa).

The first 17 residues, 1–17 (MKFSAPVLAIFLASASA), serve as a signal peptide directing secretion. The 97-residue stretch at 18-114 (QSTAELAAQI…ASASASSSAS (97 aa)) folds into the CFEM domain. Disulfide bonds link cysteine 30/cysteine 72, cysteine 34/cysteine 67, cysteine 44/cysteine 51, and cysteine 53/cysteine 88. Residue aspartate 48 participates in heme binding. Residue threonine 211 is the site of GPI-anchor amidated threonine attachment. A propeptide spans 212-235 (AAGVKEEASFFIPAAVALFAVFAV) (removed in mature form).

Belongs to the RBT5 family.

The protein localises to the cell membrane. It localises to the secreted. It is found in the host cytoplasm. The protein resides in the host nucleus. Its subcellular location is the host cell membrane. Appears to function during host infection, and may play a role in suppressing the host immune response. This Marssonina brunnea f. sp. multigermtubi (strain MB_m1) (Marssonina leaf spot fungus) protein is Effector CFEM1.